The chain runs to 494 residues: Cytochrome P450 2A7 (494 aa).

A heme-binding site is contributed by cysteine 439.

The protein belongs to the cytochrome P450 family. Heme serves as cofactor.

The protein localises to the endoplasmic reticulum membrane. The protein resides in the microsome membrane. It carries out the reaction an organic molecule + reduced [NADPH--hemoprotein reductase] + O2 = an alcohol + oxidized [NADPH--hemoprotein reductase] + H2O + H(+). In terms of biological role, cytochromes P450 are a group of heme-thiolate monooxygenases. In liver microsomes, this enzyme is involved in an NADPH-dependent electron transport pathway. It oxidizes a variety of structurally unrelated compounds, including steroids, fatty acids, and xenobiotics. This chain is Cytochrome P450 2A7 (CYP2A7), found in Homo sapiens (Human).